Reading from the N-terminus, the 354-residue chain is Dihydroorotate dehydrogenase (quinone) (354 aa).

FMN is bound by residues 67–71 and threonine 91; that span reads AGFDK. Lysine 71 contacts substrate. 116-120 lines the substrate pocket; that stretch reads NRMGF. FMN contacts are provided by asparagine 144 and asparagine 177. Residue asparagine 177 coordinates substrate. Residue serine 180 is the Nucleophile of the active site. Asparagine 182 serves as a coordination point for substrate. FMN-binding residues include lysine 213 and threonine 241. 242-243 is a binding site for substrate; sequence NT. Residues glycine 265, glycine 294, and 315-316 contribute to the FMN site; that span reads YT.

It belongs to the dihydroorotate dehydrogenase family. Type 2 subfamily. As to quaternary structure, monomer. It depends on FMN as a cofactor.

The protein resides in the cell membrane. The enzyme catalyses (S)-dihydroorotate + a quinone = orotate + a quinol. It functions in the pathway pyrimidine metabolism; UMP biosynthesis via de novo pathway; orotate from (S)-dihydroorotate (quinone route): step 1/1. Functionally, catalyzes the conversion of dihydroorotate to orotate with quinone as electron acceptor. This Mycolicibacterium smegmatis (strain ATCC 700084 / mc(2)155) (Mycobacterium smegmatis) protein is Dihydroorotate dehydrogenase (quinone).